The sequence spans 396 residues: Probable sugar efflux transporter (396 aa).

12 consecutive transmembrane segments (helical) span residues 15 to 35, 50 to 70, 81 to 101, 103 to 123, 136 to 156, 169 to 189, 209 to 229, 246 to 266, 275 to 295, 301 to 321, 333 to 353, and 364 to 384; these read VVTL…PVGL, VGIM…PFML, LICL…AWNF, VLVI…SITA, AQAL…GLPI, TFFA…KLLP, PALM…YTAY, FATV…LVFG, LLVS…LPAA, LALL…GMQV, VAMA…ALAG, and TIGY…VLIF.

It belongs to the major facilitator superfamily. SotB (TC 2.A.1.2) family.

The protein resides in the cell inner membrane. Its function is as follows. Involved in the efflux of sugars. The physiological role may be the reduction of the intracellular concentration of toxic sugars or sugar metabolites. In Salmonella arizonae (strain ATCC BAA-731 / CDC346-86 / RSK2980), this protein is Probable sugar efflux transporter.